The following is a 352-amino-acid chain: Phenylalanine--tRNA ligase alpha subunit (352 aa).

E258 lines the Mg(2+) pocket.

It belongs to the class-II aminoacyl-tRNA synthetase family. Phe-tRNA synthetase alpha subunit type 1 subfamily. Tetramer of two alpha and two beta subunits. Mg(2+) serves as cofactor.

It localises to the cytoplasm. It carries out the reaction tRNA(Phe) + L-phenylalanine + ATP = L-phenylalanyl-tRNA(Phe) + AMP + diphosphate + H(+). This Staphylococcus aureus (strain bovine RF122 / ET3-1) protein is Phenylalanine--tRNA ligase alpha subunit.